The following is a 476-amino-acid chain: Aspartyl/glutamyl-tRNA(Asn/Gln) amidotransferase subunit B (476 aa).

Belongs to the GatB/GatE family. GatB subfamily. As to quaternary structure, heterotrimer of A, B and C subunits.

It catalyses the reaction L-glutamyl-tRNA(Gln) + L-glutamine + ATP + H2O = L-glutaminyl-tRNA(Gln) + L-glutamate + ADP + phosphate + H(+). The enzyme catalyses L-aspartyl-tRNA(Asn) + L-glutamine + ATP + H2O = L-asparaginyl-tRNA(Asn) + L-glutamate + ADP + phosphate + 2 H(+). Functionally, allows the formation of correctly charged Asn-tRNA(Asn) or Gln-tRNA(Gln) through the transamidation of misacylated Asp-tRNA(Asn) or Glu-tRNA(Gln) in organisms which lack either or both of asparaginyl-tRNA or glutaminyl-tRNA synthetases. The reaction takes place in the presence of glutamine and ATP through an activated phospho-Asp-tRNA(Asn) or phospho-Glu-tRNA(Gln). In Lactobacillus delbrueckii subsp. bulgaricus (strain ATCC 11842 / DSM 20081 / BCRC 10696 / JCM 1002 / NBRC 13953 / NCIMB 11778 / NCTC 12712 / WDCM 00102 / Lb 14), this protein is Aspartyl/glutamyl-tRNA(Asn/Gln) amidotransferase subunit B.